The following is a 527-amino-acid chain: Zinc finger imprinted 2 (527 aa).

Acidic residues predominate over residues 1–16; sequence MYQPEDDNNSDVTSDD. Positions 1-104 are disordered; sequence MYQPEDDNNS…SRSQDAESYQ (104 aa). Basic and acidic residues-rich tracts occupy residues 17–26, 35–56, and 80–99; these read DMTRNRRESS, SGDR…DRWS, and FEMD…RSQD. One can recognise a KRAB domain in the interval 176 to 246; the sequence is VTFEDVLVDF…ETDSRHTVIC (71 aa). The segment at 247-322 is disordered; it reads QGESHDDPLE…GICTSPQSAS (76 aa). A compositionally biased stretch (polar residues) spans 259 to 275; sequence QGNQEKLLTPITMNDPK. Over residues 297–307 the composition is skewed to basic and acidic residues; it reads QSKDPLGKDPQ. C2H2-type zinc fingers lie at residues 328-350, 356-378, 412-434, 466-488, and 494-516; these read NRCE…ERIH, YECK…QKTH, FECF…LKAH, CQCC…YRTH, and YQCQ…YQLH.

This sequence belongs to the krueppel C2H2-type zinc-finger protein family. In terms of tissue distribution, highest levels of expression in adult testis; modest levels in fetal kidney and brain.

The protein resides in the nucleus. Its function is as follows. May be involved in transcriptional regulation. This chain is Zinc finger imprinted 2 (ZIM2), found in Homo sapiens (Human).